The primary structure comprises 94 residues: DNA-directed RNA polymerase subunit omega (94 aa).

The protein belongs to the RNA polymerase subunit omega family. The RNAP catalytic core consists of 2 alpha, 1 beta, 1 beta' and 1 omega subunit. When a sigma factor is associated with the core the holoenzyme is formed, which can initiate transcription.

The enzyme catalyses RNA(n) + a ribonucleoside 5'-triphosphate = RNA(n+1) + diphosphate. In terms of biological role, promotes RNA polymerase assembly. Latches the N- and C-terminal regions of the beta' subunit thereby facilitating its interaction with the beta and alpha subunits. This Limosilactobacillus fermentum (strain NBRC 3956 / LMG 18251) (Lactobacillus fermentum) protein is DNA-directed RNA polymerase subunit omega.